Reading from the N-terminus, the 377-residue chain is Alanine dehydrogenase (377 aa).

Substrate-binding residues include R15 and K74. H95 (proton donor/acceptor) is an active-site residue. NAD(+) is bound by residues S133, D197, R202, S219, 238-239 (VL), 266-269 (VAID), and 304-307 (VGNM). D269 serves as the catalytic Proton donor/acceptor.

The protein belongs to the AlaDH/PNT family. In terms of assembly, homohexamer.

It carries out the reaction L-alanine + NAD(+) + H2O = pyruvate + NH4(+) + NADH + H(+). Its pathway is organosulfur degradation; alkanesulfonate degradation. Its function is as follows. Involved in an anaerobic respiration pathway that converts the sulfonate taurine (2-aminoethanesulfonate) to ammonia, acetate and sulfide. Acts as an alanine dehydrogenase that regenerates pyruvate, the amino group acceptor for the taurine--pyruvate aminotransferase enzyme, and liberates ammonia. This is Alanine dehydrogenase from Bilophila wadsworthia (strain 3_1_6).